Consider the following 275-residue polypeptide: Fructose permease IID component (275 aa).

The region spanning Lys-5 to Leu-274 is the PTS EIID domain. Helical transmembrane passes span Met-100 to Ile-120, Leu-127 to Leu-147, Ile-187 to Ile-207, Val-227 to Met-247, and Leu-255 to Ala-275.

The protein resides in the cell membrane. Functionally, the phosphoenolpyruvate-dependent sugar phosphotransferase system (PTS), a major carbohydrate active -transport system, catalyzes the phosphorylation of incoming sugar substrates concomitant with their translocation across the cell membrane. This system is involved in fructose transport. The polypeptide is Fructose permease IID component (levG) (Bacillus subtilis (strain 168)).